A 349-amino-acid chain; its full sequence is UPF0324 inner membrane protein YeiH (349 aa).

Residues 1 to 12 (MTELTLQNHCRT) lie on the Periplasmic side of the membrane. The helical transmembrane segment at 13–35 (MWHFIPGLALSAVITGVALWGGA) threads the bilayer. The Cytoplasmic portion of the chain corresponds to 36-38 (IPA). A helical transmembrane segment spans residues 39–61 (VAGAGFSALTLAILLGMVIGNTI). Residues 62 to 99 (YPQIWKQCDGGVLFAKQHLLRLGIILYGFRLTFSQIAD) are Periplasmic-facing. Residues 100-122 (VGISGIVIDVLTLSSTFMLACFL) form a helical membrane-spanning segment. The Cytoplasmic segment spans residues 123 to 131 (GQKVFGLDR). Residues 132-151 (HTSWLIGAGSSICGAAAVLA) form a helical membrane-spanning segment. At 152-162 (TEPVVKAEASK) the chain is on the periplasmic side. The helical transmembrane segment at 163–185 (VTVAVATVVIFGTIAIFLYPAMY) threads the bilayer. Topologically, residues 186-261 (PLLAHWFSPE…SPATGAEKSK (76 aa)) are cytoplasmic. Residues 262 to 284 (ITIPWFAIFFIVVAIFNSFHLLP) traverse the membrane as a helical segment. Topologically, residues 285–290 (KAVVDM) are periplasmic. Residues 291-313 (LVTLDTVLLAMAMAALGLTTHVS) form a helical membrane-spanning segment. Residues 314-322 (ALKKAGAKP) lie on the Cytoplasmic side of the membrane. The helical transmembrane segment at 323–345 (LLMALALFAWLIIGGGAINVLIH) threads the bilayer. The Periplasmic portion of the chain corresponds to 346–349 (SLIA).

It belongs to the UPF0324 family.

Its subcellular location is the cell inner membrane. The sequence is that of UPF0324 inner membrane protein YeiH (yeiH) from Salmonella typhimurium (strain LT2 / SGSC1412 / ATCC 700720).